A 231-amino-acid polypeptide reads, in one-letter code: uncharacterized protein (231 aa).

Positions 1-10 (MDGKKREVEN) are enriched in basic and acidic residues. The interval 1–35 (MDGKKREVENGKNGNNIKDGNSSNTTNYGKDTKTT) is disordered. Residues 11–24 (GKNGNNIKDGNSSN) show a composition bias toward low complexity. Residues 25 to 35 (TTNYGKDTKTT) are compositionally biased toward polar residues.

This is an uncharacterized protein from Aquifex aeolicus (strain VF5).